The chain runs to 428 residues: Adenylosuccinate synthetase (428 aa).

Residues 12–18 (GDEGKGK) and 40–42 (GHT) each bind GTP. Catalysis depends on D13, which acts as the Proton acceptor. The Mg(2+) site is built by D13 and G40. Residues 13–16 (DEGK), 38–41 (NAGH), T130, R144, Q225, T240, and R304 each bind IMP. The active-site Proton donor is H41. 300-306 (VTTGRAR) contacts substrate. GTP is bound by residues R306, 332–334 (KID), and 414–416 (SVG).

This sequence belongs to the adenylosuccinate synthetase family. As to quaternary structure, homodimer. Mg(2+) serves as cofactor.

Its subcellular location is the cytoplasm. The enzyme catalyses IMP + L-aspartate + GTP = N(6)-(1,2-dicarboxyethyl)-AMP + GDP + phosphate + 2 H(+). The protein operates within purine metabolism; AMP biosynthesis via de novo pathway; AMP from IMP: step 1/2. In terms of biological role, plays an important role in the de novo pathway of purine nucleotide biosynthesis. Catalyzes the first committed step in the biosynthesis of AMP from IMP. This is Adenylosuccinate synthetase from Clostridium botulinum (strain Loch Maree / Type A3).